Here is a 453-residue protein sequence, read N- to C-terminus: Midnolin-A (453 aa).

Residues 20–94 form the Ubiquitin-like domain; that stretch reads MNLNIQSTTG…LTLLPSVEAG (75 aa). 4 disordered regions span residues 184-219, 232-256, 333-376, and 390-429; these read SHLA…TTSV, CAEQ…RSRK, RNAK…ENRA, and QKRL…EGSL. Residues 206 to 219 show a composition bias toward polar residues; the sequence is HCNGPHSSPLTTSV. 2 stretches are compositionally biased toward low complexity: residues 239–252 and 338–351; these read STRG…SPSS and TSPQ…TTHP. The segment covering 365–376 has biased composition (basic and acidic residues); that stretch reads SGDRLRQTENRA. A compositionally biased stretch (basic residues) spans 390-399; the sequence is QKRLRRKARR. Positions 415–428 are enriched in low complexity; sequence RTSSNSSTSSGEGS.

The protein resides in the nucleus. It localises to the cytoplasm. It is found in the cytosol. The protein localises to the nucleolus. Functionally, facilitates ubiquitin-independent proteasomal degradation of polycomb protein CBX4. Plays a role in inhibiting the activity of glucokinase GCK and both glucose-induced and basal insulin secretion. The polypeptide is Midnolin-A (midn-a) (Xenopus laevis (African clawed frog)).